We begin with the raw amino-acid sequence, 640 residues long: ETV5-related protein Ets96B (640 aa).

Residues 315 to 375 (HADSTTTAAQ…HHGHQQAEQQ (61 aa)) are disordered. Residues 321–356 (TAAQQQQQQQEQQQQQQQQQQQQQHQQQLQQAAALH) adopt a coiled-coil conformation. Positions 322 to 355 (AAQQQQQQQEQQQQQQQQQQQQQHQQQLQQAAAL) are enriched in low complexity. The span at 356 to 369 (HPHHHHSHHGHHGH) shows a compositional bias: basic residues. Residues 498 to 579 (LQLWQFLVAL…NGERYVYRFV (82 aa)) constitute a DNA-binding region (ETS). The segment covering 609-624 (LAKTPPTSGDSQTQSP) has biased composition (polar residues). The interval 609 to 628 (LAKTPPTSGDSQTQSPRVAK) is disordered.

It belongs to the ETS family. As to expression, in the adult brain, expressed almost exclusively in dopaminergic neurons.

It is found in the nucleus. Functionally, required in dopaminergic neurons to regulate expression of genes involved in dopamine signaling. Decreases expression of the dopamine transporter DAT and increases expression of the dopamine transporter Vmat and the tyrosine 3-monooxygenase ple which is involved in dopamine biosynthesis. Also involved in negatively regulating the expression of a group of endoplasmic reticulum proteins, the molecular chaperone Calr and the protein disulfide isomerases CaBP1 and ERp60. This Drosophila melanogaster (Fruit fly) protein is ETV5-related protein Ets96B.